Reading from the N-terminus, the 1002-residue chain is Mannan endo-1,4-beta-mannosidase (1002 aa).

Positions 1-28 (MKTTVTKLLATVAAASTIFGMSTLPAFA) are cleaved as a signal peptide. The GH26 domain maps to 49–396 (AETRALFDKL…ADSNKNLMAS (348 aa)). H144 contacts substrate. E205 functions as the Proton donor in the catalytic mechanism. Substrate contacts are provided by W210 and Y278. E316 serves as the catalytic Nucleophile. K384 provides a ligand contact to substrate. CBM11 domains are found at residues 523-703 (VDNV…GKRD) and 717-897 (AKAQ…NEQT). Disordered regions lie at residues 702-722 (RDAY…AQSV) and 888-969 (PAEN…LSRT). Residues 707–719 (PNTNPTPGNTAKA) show a composition bias toward polar residues. 2 stretches are compositionally biased toward basic and acidic residues: residues 897–913 (TPKD…KEQE) and 952–966 (PDTK…KDGL). The short motif at 966–970 (LSRTG) is the LPXTG sorting signal element. T969 is modified (pentaglycyl murein peptidoglycan amidated threonine). Residues 970 to 1002 (GSNIISAIAAVAVLLLGGCAVLIARKRKGGDIE) constitute a propeptide, removed by sortase.

The protein belongs to the glycosyl hydrolase 26 family. As to quaternary structure, homodimer.

Its subcellular location is the secreted. The protein resides in the cell wall. It catalyses the reaction Random hydrolysis of (1-&gt;4)-beta-D-mannosidic linkages in mannans, galactomannans and glucomannans.. Its function is as follows. Beta-mannanase likely involved in the utilization of carbohydrates in the human gut. Catalyzes the hydrolysis of different beta-1,4-linked mannans, such as ivory nut mannan, konjac glucomannan, as well as carob and guar gum galactomannans, to a mixture of oligosaccharides. The dominant product from ivory nut mannan is found to be mannotriose; mannobiose and mannotetraose are produced to a lesser extent. Does not hydrolyze mannobiose, and hydrolyzes mannotriose at a significantly lower rate than the longer oligosaccharides. In Bifidobacterium adolescentis (strain ATCC 15703 / DSM 20083 / NCTC 11814 / E194a), this protein is Mannan endo-1,4-beta-mannosidase.